The primary structure comprises 145 residues: MSNCRRLLCRQLSSAYLNYLPFYFLIYRPFSLYLSSCEYWQSCFSFFFLFFLFFFFFFTFQFLVAFPILLFKVSLNSTLTKHVRPIHQRTKARSLTHHCIPKRWNIHFFFSGLLHKTISRIFSWIGNTRQVAPTKHTPKYLLNTI.

The chain crosses the membrane as a helical span at residues 46–66; the sequence is FFFLFFLFFFFFFTFQFLVAF.

It localises to the membrane. This is an uncharacterized protein from Saccharomyces cerevisiae (strain ATCC 204508 / S288c) (Baker's yeast).